We begin with the raw amino-acid sequence, 118 residues long: SPbeta prophage-derived uncharacterized protein YolB (118 aa).

This chain is SPbeta prophage-derived uncharacterized protein YolB (yolB), found in Bacillus subtilis (strain 168).